The following is a 225-amino-acid chain: Protein YIP4 (225 aa).

Phosphoserine is present on residues Ser-27 and Ser-28. The next 5 membrane-spanning stretches (helical) occupy residues 91-111 (WDLW…ALST), 118-138 (SVFT…SLNI), 154-176 (LGYS…LIFI), 180-199 (VIVA…LQNS), and 205-225 (KLLA…IIFL).

Belongs to the YIP1 family. Interacts with the YIP1 family members yip1 and yip5, and with several Rab GTPases.

It is found in the membrane. May be involved in proper membrane localization of Rab GTPases. The polypeptide is Protein YIP4 (Schizosaccharomyces pombe (strain 972 / ATCC 24843) (Fission yeast)).